Here is a 410-residue protein sequence, read N- to C-terminus: G-protein coupled receptor family C group 5 member B (410 aa).

An N-terminal signal peptide occupies residues 1-28 (MFLVLERKMRTHQVFPLPLLLVIASVAS). Residues 29–56 (ENASTSRGCGLDLLPQYVSLCDLDAIWG) are Extracellular-facing. N-linked (GlcNAc...) asparagine glycosylation occurs at asparagine 30. The chain crosses the membrane as a helical span at residues 57–77 (IVVEAVAGAGALITLLLMLIL). Residues 78 to 94 (LVRLPFIKDKERKRPVC) lie on the Cytoplasmic side of the membrane. A helical transmembrane segment spans residues 95–115 (LHFLFLLGTLGLFGLTFAFII). The Extracellular segment spans residues 116-126 (QMDETICSIRR). Residues 127-147 (FLWGVLFALCFSCLLSQAWRV) traverse the membrane as a helical segment. Over 148-164 (RRLVRQGTSPASWQLVS) the chain is Cytoplasmic. Residues 165–185 (LALCLMLVQVIIATEWLVLTV) form a helical membrane-spanning segment. Residues 186-199 (LRDTKPACAYEPMD) lie on the Extracellular side of the membrane. A helical membrane pass occupies residues 200-220 (FVMALIYDMVLLAITLAQSLF). The Cytoplasmic segment spans residues 221–234 (TLCGKFKRWKVNGA). Residues 235-255 (FILVTTFLSALIWVVWMTMYL) form a helical membrane-spanning segment. Residues 256–271 (FGNSLIKQGDAWSDPT) lie on the Extracellular side of the membrane. Residues 272–292 (LAITLAASGWVFVIFHAIPEI) form a helical membrane-spanning segment. The Cytoplasmic segment spans residues 293–410 (HYTLLPPLQE…PPSHTGRHHW (118 aa)). Serine 355 is modified (phosphoserine). Positions 356-381 (LEQRSSSLGKKPSSLGNRPSAPFRSN) are disordered. Low complexity predominate over residues 360 to 371 (SSSLGKKPSSLG).

This sequence belongs to the G-protein coupled receptor 3 family.

It is found in the cell membrane. The protein resides in the cytoplasmic vesicle membrane. Functionally, G-protein coupled receptor involved in the regulation of cell volume. This Mus musculus (Mouse) protein is G-protein coupled receptor family C group 5 member B (Gprc5b).